Consider the following 219-residue polypeptide: Vesicle-associated membrane protein 712 (219 aa).

Residues 1–189 lie on the Cytoplasmic side of the membrane; the sequence is MSILYALVAR…NNTVWWRNCK (189 aa). In terms of domain architecture, Longin spans 7–111; that stretch reads LVARGTVVLA…AMNDEFSRVL (105 aa). A v-SNARE coiled-coil homology domain is found at 126–186; the sequence is TISRIKGEMN…RRFNNTVWWR (61 aa). Residues 190–210 form a helical; Anchor for type IV membrane protein membrane-spanning segment; sequence LTLLLILVLLVIIYIGVAFAC. The Vesicular portion of the chain corresponds to 211-219; sequence HGPTLPSCV.

Belongs to the synaptobrevin family. Expressed in flowers, leaves, stems and roots.

It is found in the vacuole membrane. It localises to the prevacuolar compartment membrane. Involved in the targeting and/or fusion of transport vesicles to their target membrane. The sequence is that of Vesicle-associated membrane protein 712 from Arabidopsis thaliana (Mouse-ear cress).